The sequence spans 20 residues: Probable cinnamyl alcohol dehydrogenase 1 (20 aa).

The protein belongs to the zinc-containing alcohol dehydrogenase family. It depends on Zn(2+) as a cofactor.

It catalyses the reaction (E)-cinnamyl alcohol + NADP(+) = (E)-cinnamaldehyde + NADPH + H(+). The enzyme catalyses (E)-coniferol + NADP(+) = (E)-coniferaldehyde + NADPH + H(+). It carries out the reaction (E)-sinapyl alcohol + NADP(+) = (E)-sinapaldehyde + NADPH + H(+). The catalysed reaction is (E)-4-coumaroyl alcohol + NADP(+) = (E)-4-coumaraldehyde + NADPH + H(+). It catalyses the reaction (E)-caffeyl alcohol + NADP(+) = (E)-caffeyl aldehyde + NADPH + H(+). It participates in aromatic compound metabolism; phenylpropanoid biosynthesis. Its function is as follows. Involved in lignin biosynthesis. Catalyzes the final step specific for the production of lignin monomers, like coniferyl alcohol, sinapyl alcohol and 4-coumaryl alcohol. The polypeptide is Probable cinnamyl alcohol dehydrogenase 1 (Pseudotsuga menziesii (Douglas-fir)).